The primary structure comprises 66 residues: Stress-induced protein KIN2 (66 aa).

A compositionally biased stretch (polar residues) spans 1-10 (MSETNKNAFQ). The interval 1–20 (MSETNKNAFQAGQAAGKAEE) is disordered. 2 consecutive repeats follow at residues 31-35 (DAAAA) and 49-53 (DAAVG).

As to quaternary structure, interacts with DEK3. In terms of tissue distribution, expressed at high levels in embryos and mature seeds.

The sequence is that of Stress-induced protein KIN2 from Arabidopsis thaliana (Mouse-ear cress).